The following is a 351-amino-acid chain: Ion-translocating oxidoreductase complex subunit D (351 aa).

4 helical membrane-spanning segments follow: residues 18–38 (IMLL…YFFG), 40–60 (GSLI…GAVL), 87–107 (LPPL…IVIA), and 121–141 (PAMV…TSWL). Position 185 is an FMN phosphoryl threonine (Thr185). A run of 5 helical transmembrane segments spans residues 211–231 (VLAG…GLLL), 241–261 (IPVS…MIAP), 264–284 (FASP…FFIA), 298–318 (LIFG…GGYP), and 320–340 (GVAF…HYTQ).

The protein belongs to the NqrB/RnfD family. In terms of assembly, the complex is composed of six subunits: RnfA, RnfB, RnfC, RnfD, RnfE and RnfG. FMN serves as cofactor.

It localises to the cell inner membrane. Its function is as follows. Part of a membrane-bound complex that couples electron transfer with translocation of ions across the membrane. The chain is Ion-translocating oxidoreductase complex subunit D from Yersinia pseudotuberculosis serotype I (strain IP32953).